The primary structure comprises 94 residues: Small ribosomal subunit protein uS19 (94 aa).

Belongs to the universal ribosomal protein uS19 family.

Protein S19 forms a complex with S13 that binds strongly to the 16S ribosomal RNA. The protein is Small ribosomal subunit protein uS19 of Anaplasma phagocytophilum (strain HZ).